The sequence spans 433 residues: Glutamate-1-semialdehyde 2,1-aminomutase (433 aa).

Lys-273 carries the N6-(pyridoxal phosphate)lysine modification.

This sequence belongs to the class-III pyridoxal-phosphate-dependent aminotransferase family. HemL subfamily. Homodimer. Pyridoxal 5'-phosphate serves as cofactor.

It is found in the cytoplasm. It catalyses the reaction (S)-4-amino-5-oxopentanoate = 5-aminolevulinate. It functions in the pathway porphyrin-containing compound metabolism; protoporphyrin-IX biosynthesis; 5-aminolevulinate from L-glutamyl-tRNA(Glu): step 2/2. In Ralstonia nicotianae (strain ATCC BAA-1114 / GMI1000) (Ralstonia solanacearum), this protein is Glutamate-1-semialdehyde 2,1-aminomutase.